A 67-amino-acid chain; its full sequence is Histone H2A (67 aa).

Gln60 is subject to N5-methylglutamine.

Belongs to the histone H2A family. In terms of assembly, the nucleosome is a histone octamer containing two molecules each of H2A, H2B, H3 and H4 assembled in one H3-H4 heterotetramer and two H2A-H2B heterodimers. The octamer wraps approximately 147 bp of DNA.

It is found in the nucleus. It localises to the chromosome. In terms of biological role, core component of nucleosome. Nucleosomes wrap and compact DNA into chromatin, limiting DNA accessibility to the cellular machineries which require DNA as a template. Histones thereby play a central role in transcription regulation, DNA repair, DNA replication and chromosomal stability. DNA accessibility is regulated via a complex set of post-translational modifications of histones, also called histone code, and nucleosome remodeling. This chain is Histone H2A, found in Olisthodiscus luteus (Marine phytoflagellate).